Here is an 876-residue protein sequence, read N- to C-terminus: Valine--tRNA ligase (876 aa).

Positions 43–53 (PNVTGVLHMGH) match the 'HIGH' region motif. The 'KMSKS' region motif lies at 532 to 536 (KMSKS). Lys-535 serves as a coordination point for ATP. Coiled coils occupy residues 805–826 (GNMI…HKEG) and 853–875 (RKKQ…SLKN).

It belongs to the class-I aminoacyl-tRNA synthetase family. ValS type 1 subfamily. Monomer.

Its subcellular location is the cytoplasm. The enzyme catalyses tRNA(Val) + L-valine + ATP = L-valyl-tRNA(Val) + AMP + diphosphate. Its function is as follows. Catalyzes the attachment of valine to tRNA(Val). As ValRS can inadvertently accommodate and process structurally similar amino acids such as threonine, to avoid such errors, it has a 'posttransfer' editing activity that hydrolyzes mischarged Thr-tRNA(Val) in a tRNA-dependent manner. The polypeptide is Valine--tRNA ligase (Bacteroides fragilis (strain ATCC 25285 / DSM 2151 / CCUG 4856 / JCM 11019 / LMG 10263 / NCTC 9343 / Onslow / VPI 2553 / EN-2)).